The following is a 485-amino-acid chain: E3 ubiquitin-protein ligase RNF8 (485 aa).

The FHA domain maps to 38 to 92; it reads VTVGRGFGVTYQLVSKICPLMISRNHCVLKQNPEGQWTIMDNKSLNGVWLNRARL. The interval 68 to 72 is required for interaction with PIWIL1; that stretch reads QNPEG. Ser157 is modified (phosphoserine). Positions 181-220 are disordered; sequence CESGQPVKSQGKGEVASTPSDNLDPKLTALEPSKTTGAPI. The RING-type zinc finger occupies 403–441; that stretch reads CIICSEYFIEAVTLNCAHSFCSYCINEWMKRKIECPICR.

It belongs to the RNF8 family. As to quaternary structure, homodimer. Forms a E2-E3 ubiquitin ligase complex composed of the RNF8 homodimer and a E2 heterodimer of UBE2N and UBE2V2. Interacts with class III E2s, including UBE2E1, UBE2E2, and UBE2E3 and with UBE2N. Interacts with RXRA. Interacts (via FHA domain) with ATM-phosphorylated MDC1. Interacts (via FHA domain) with 'Thr-4827' phosphorylated HERC2 (via C-terminus). Interacts with PIWIL1; leading to sequester RNF8 in the cytoplasm. Interacts with WRAP53/TCAB1. (Microbial infection) Interacts (via FHA domain) with phosphorylated human herpesvirus 1 ICP0 protein; leading to RNF8 degradation by the proteasome. In terms of processing, autoubiquitinated through 'Lys-48' and 'Lys-63' of ubiquitin. 'Lys-63' polyubiquitination is mediated by UBE2N. 'Lys-29'-type polyubiquitination is also observed, but it doesn't require its own functional RING-type zinc finger. In terms of tissue distribution, ubiquitous. In fetal tissues, highest expression in brain, thymus and liver. In adult tissues, highest levels in brain and testis, lowest levels in peripheral blood cells.

It localises to the nucleus. Its subcellular location is the cytoplasm. It is found in the midbody. The protein localises to the chromosome. The protein resides in the telomere. The enzyme catalyses S-ubiquitinyl-[E2 ubiquitin-conjugating enzyme]-L-cysteine + [acceptor protein]-L-lysine = [E2 ubiquitin-conjugating enzyme]-L-cysteine + N(6)-ubiquitinyl-[acceptor protein]-L-lysine.. The protein operates within protein modification; protein ubiquitination. E3 ubiquitin-protein ligase that plays a key role in DNA damage signaling via 2 distinct roles: by mediating the 'Lys-63'-linked ubiquitination of histones H2A and H2AX and promoting the recruitment of DNA repair proteins at double-strand breaks (DSBs) sites, and by catalyzing 'Lys-48'-linked ubiquitination to remove target proteins from DNA damage sites. Following DNA DSBs, it is recruited to the sites of damage by ATM-phosphorylated MDC1 and catalyzes the 'Lys-63'-linked ubiquitination of histones H2A and H2AX, thereby promoting the formation of TP53BP1 and BRCA1 ionizing radiation-induced foci (IRIF). Also controls the recruitment of UIMC1-BRCC3 (RAP80-BRCC36) and PAXIP1/PTIP to DNA damage sites. Promotes the recruitment of NBN to DNA damage sites by catalyzing 'Lys-6'-linked ubiquitination of NBN. Also recruited at DNA interstrand cross-links (ICLs) sites and catalyzes 'Lys-63'-linked ubiquitination of histones H2A and H2AX, leading to recruitment of FAAP20/C1orf86 and Fanconi anemia (FA) complex, followed by interstrand cross-link repair. H2A ubiquitination also mediates the ATM-dependent transcriptional silencing at regions flanking DSBs in cis, a mechanism to avoid collision between transcription and repair intermediates. Promotes the formation of 'Lys-63'-linked polyubiquitin chains via interactions with the specific ubiquitin-conjugating UBE2N/UBC13 and ubiquitinates non-histone substrates such as PCNA. Substrates that are polyubiquitinated at 'Lys-63' are usually not targeted for degradation. Also catalyzes the formation of 'Lys-48'-linked polyubiquitin chains via interaction with the ubiquitin-conjugating UBE2L6/UBCH8, leading to degradation of substrate proteins such as CHEK2, JMJD2A/KDM4A and KU80/XRCC5: it is still unclear how the preference toward 'Lys-48'- versus 'Lys-63'-linked ubiquitination is regulated but it could be due to RNF8 ability to interact with specific E2 specific ligases. For instance, interaction with phosphorylated HERC2 promotes the association between RNF8 and UBE2N/UBC13 and favors the specific formation of 'Lys-63'-linked ubiquitin chains. Promotes non-homologous end joining (NHEJ) by promoting the 'Lys-48'-linked ubiquitination and degradation the of KU80/XRCC5. Following DNA damage, mediates the ubiquitination and degradation of JMJD2A/KDM4A in collaboration with RNF168, leading to unmask H4K20me2 mark and promote the recruitment of TP53BP1 at DNA damage sites. Following DNA damage, mediates the ubiquitination and degradation of POLD4/p12, a subunit of DNA polymerase delta. In the absence of POLD4, DNA polymerase delta complex exhibits higher proofreading activity. In addition to its function in damage signaling, also plays a role in higher-order chromatin structure by mediating extensive chromatin decondensation. Involved in the activation of ATM by promoting histone H2B ubiquitination, which indirectly triggers histone H4 'Lys-16' acetylation (H4K16ac), establishing a chromatin environment that promotes efficient activation of ATM kinase. Required in the testis, where it plays a role in the replacement of histones during spermatogenesis. At uncapped telomeres, promotes the joining of deprotected chromosome ends by inducing H2A ubiquitination and TP53BP1 recruitment, suggesting that it may enhance cancer development by aggravating telomere-induced genome instability in case of telomeric crisis. Promotes the assembly of RAD51 at DNA DSBs in the absence of BRCA1 and TP53BP1 Also involved in class switch recombination in immune system, via its role in regulation of DSBs repair. May be required for proper exit from mitosis after spindle checkpoint activation and may regulate cytokinesis. May play a role in the regulation of RXRA-mediated transcriptional activity. Not involved in RXRA ubiquitination by UBE2E2. In Homo sapiens (Human), this protein is E3 ubiquitin-protein ligase RNF8.